The primary structure comprises 25 residues: Antifungal protein 1 (25 aa).

Residues 1–25 (QSERFEQQMQGQDFSHDERFLSQAA) form a disordered region. A compositionally biased stretch (basic and acidic residues) spans 14–25 (FSHDERFLSQAA).

Belongs to the 2S seed storage albumins family. Expressed in seed (at protein level). Not detected in pulp, stems and leaves.

Its function is as follows. Has strong antifungal activity against T.harzianum, F.oxysporum and A.fumigatus with IC(50) values of 32 ug/ml, 34 ug/ml and 40 ug/ml, restectively. Lacks antifungal activity against R.solani, P.brasiliensis and C.albicans. The protein is Antifungal protein 1 of Passiflora edulis (Passion fruit).